The primary structure comprises 250 residues: MSHNFHVIIPARYHSSRFPGKLLQEINGITVIERVYRQALLAEPMSVIIATDHDEIADRAIQFGAEVVITSHTHQTGTDRIAEVVAKGSFAPDDVIVNVQGDEPFIRPQLIQQVACSLTKTKAPVSTLCWPISSLQILNNPNVVKVVRTRDNHALYFSRSAIPFHRDDKNAYSNTFRHIGLYAYRAAFLLEFVSWPPCTLEQIECLEQLRILWSGFSIRVEEACEEPLQDINTKEDLILAQQYFLDTFNV.

Belongs to the KdsB family.

Its subcellular location is the cytoplasm. It carries out the reaction 3-deoxy-alpha-D-manno-oct-2-ulosonate + CTP = CMP-3-deoxy-beta-D-manno-octulosonate + diphosphate. It functions in the pathway nucleotide-sugar biosynthesis; CMP-3-deoxy-D-manno-octulosonate biosynthesis; CMP-3-deoxy-D-manno-octulosonate from 3-deoxy-D-manno-octulosonate and CTP: step 1/1. The protein operates within bacterial outer membrane biogenesis; lipopolysaccharide biosynthesis. Its function is as follows. Activates KDO (a required 8-carbon sugar) for incorporation into bacterial lipopolysaccharide in Gram-negative bacteria. In Legionella pneumophila (strain Lens), this protein is 3-deoxy-manno-octulosonate cytidylyltransferase.